Consider the following 137-residue polypeptide: MANAASGMAVEDECKLKFLELKSKRNYRFIIFRIDGQQVVVEKLGNPDETYDDFTASLPANECRYAVFDFDFITDENCQKSKIFFIAWSPDSSRVRMKMVYASSKDRFKRELDGIQVELQATDPSEMSFDIIKSRAL.

The residue at position 6 (S6) is a Phosphoserine. The region spanning 7–137 (GMAVEDECKL…SFDIIKSRAL (131 aa)) is the ADF-H domain.

It belongs to the actin-binding proteins ADF family. Specifically expressed in pollen.

Its subcellular location is the cytoplasm. The protein localises to the cytoskeleton. In terms of biological role, actin-depolymerizing protein. Severs actin filaments (F-actin) and binds to actin monomers. Binds monomeric actin (G-actin) with a marked preference for the ADP-loaded form and inhibits the rate of nucleotide exchange on G-actin. Required for pollen tube growth. Promotes turnover of longitudinal actin cables by severing actin filaments in pollen tubes. In Arabidopsis thaliana (Mouse-ear cress), this protein is Actin-depolymerizing factor 7 (ADF7).